Reading from the N-terminus, the 495-residue chain is Syntaphilin (495 aa).

A disordered region spans residues 1-74 (MAMSLQGSRR…HGIKPPTPEQ (74 aa)). Residues 7–49 (GSRRASAGSRRRTSPPVSVRDAYGTSSLSSSSNSGSCKGSDSS) show a composition bias toward low complexity. Residues 79 to 161 (LQQKEVCIRH…VKNNLIDKDK (83 aa)) are a coiled coil. A disordered region spans residues 191–244 (VAKEEGTGESAGGSPARSLTRSSTYTKLSDPAVCGDRQPGDPSNTSAEDGADSG). Phosphoserine occurs at positions 200 and 204. The span at 207 to 217 (RSLTRSSTYTK) shows a compositional bias: polar residues. At threonine 214 the chain carries Phosphothreonine. Serine 219 is modified (phosphoserine). Phosphothreonine is present on threonine 235. The helical transmembrane segment at 427–446 (YIVDLLAVVVPAVPTVAWLC) threads the bilayer.

As to quaternary structure, binds to STX1A. Interacts with DNM1; this interaction inhibits the binding of DNM1 to AMPH and DNM1-receptor-mediated endocytosis.

Its subcellular location is the membrane. It is found in the synapse. The protein localises to the synaptosome. In terms of biological role, inhibits SNARE complex formation by absorbing free STX1A. In Mus musculus (Mouse), this protein is Syntaphilin.